Reading from the N-terminus, the 350-residue chain is 2-oxoglutarate and iron-dependent oxygenase domain-containing protein 2 (350 aa).

In terms of domain architecture, Fe2OG dioxygenase spans 215-309 (DSHRAFVVKY…RWNLVVWLRA (95 aa)). Fe cation is bound by residues H235, D237, and H290. Residue R300 participates in 2-oxoglutarate binding.

Belongs to the OGFOD2 family. Fe(2+) is required as a cofactor. L-ascorbate serves as cofactor.

The chain is 2-oxoglutarate and iron-dependent oxygenase domain-containing protein 2 (OGFOD2) from Homo sapiens (Human).